The chain runs to 185 residues: Ribosome-recycling factor (185 aa).

The protein belongs to the RRF family.

It is found in the cytoplasm. Its function is as follows. Responsible for the release of ribosomes from messenger RNA at the termination of protein biosynthesis. May increase the efficiency of translation by recycling ribosomes from one round of translation to another. The chain is Ribosome-recycling factor from Campylobacter hominis (strain ATCC BAA-381 / DSM 21671 / CCUG 45161 / LMG 19568 / NCTC 13146 / CH001A).